The following is a 351-amino-acid chain: tRNA-splicing endonuclease (351 aa).

Catalysis depends on residues Y287, H298, and K329.

It belongs to the tRNA-intron endonuclease family. Archaeal long subfamily. In terms of assembly, homodimer.

The catalysed reaction is pretRNA = a 3'-half-tRNA molecule with a 5'-OH end + a 5'-half-tRNA molecule with a 2',3'-cyclic phosphate end + an intron with a 2',3'-cyclic phosphate and a 5'-hydroxyl terminus.. Endonuclease that removes tRNA introns. Cleaves pre-tRNA at the 5'- and 3'-splice sites to release the intron. The products are an intron and two tRNA half-molecules bearing 2',3' cyclic phosphate and 5'-OH termini. Recognizes a pseudosymmetric substrate in which 2 bulged loops of 3 bases are separated by a stem of 4 bp. This chain is tRNA-splicing endonuclease, found in Methanococcoides burtonii (strain DSM 6242 / NBRC 107633 / OCM 468 / ACE-M).